Reading from the N-terminus, the 78-residue chain is Probable [Fe-S]-dependent transcriptional repressor (78 aa).

4 residues coordinate iron-sulfur cluster: Cys56, Cys61, Cys64, and Cys70.

The protein belongs to the FeoC family.

Functionally, may function as a transcriptional regulator that controls feoABC expression. The protein is Probable [Fe-S]-dependent transcriptional repressor of Enterobacter sp. (strain 638).